An 81-amino-acid polypeptide reads, in one-letter code: Small ribosomal subunit protein bS16 (81 aa).

The protein belongs to the bacterial ribosomal protein bS16 family.

In Lachnoclostridium phytofermentans (strain ATCC 700394 / DSM 18823 / ISDg) (Clostridium phytofermentans), this protein is Small ribosomal subunit protein bS16.